The primary structure comprises 490 residues: Betaine aldehyde dehydrogenase (490 aa).

T26, I27, and D93 together coordinate K(+). G150–W152 serves as a coordination point for NAD(+). Catalysis depends on K162, which acts as the Charge relay system. Residue K176–E179 participates in NAD(+) binding. V180 is a K(+) binding site. G230–S233 is a binding site for NAD(+). A K(+)-binding site is contributed by L246. The active-site Proton acceptor is the E252. 3 residues coordinate NAD(+): G254, C286, and E387. C286 (nucleophile) is an active-site residue. Residue C286 is modified to Cysteine sulfenic acid (-SOH). K(+) contacts are provided by K457 and G460. Residue E464 is the Charge relay system of the active site.

The protein belongs to the aldehyde dehydrogenase family. As to quaternary structure, dimer of dimers. Requires K(+) as cofactor.

It carries out the reaction betaine aldehyde + NAD(+) + H2O = glycine betaine + NADH + 2 H(+). Its pathway is amine and polyamine biosynthesis; betaine biosynthesis via choline pathway; betaine from betaine aldehyde: step 1/1. In terms of biological role, involved in the biosynthesis of the osmoprotectant glycine betaine. Catalyzes the irreversible oxidation of betaine aldehyde to the corresponding acid. The protein is Betaine aldehyde dehydrogenase of Escherichia coli (strain SMS-3-5 / SECEC).